The primary structure comprises 517 residues: MAHLLLAVVAITLALSQSVFGGSPYSNPHFTGSRSVITHLMQWKFDDIAAECERFLGPKGYGGIQLSPVNEHAVLGNRPWYELYQPVGYKIQSRSGNEEQFKGMVQRCNKVGVRIYVDIVMNHMSGAQEGHGNCWFKLQWHHDVSRCSLLVPNDFHGRESCHTDNMDIKNYDNPEEARNCRLSGLRDLKQSSEYVRQKQADFLNHLIDLGVAGSRSDASKHMWPGDLEAIYGKLHNLNTAYFPANSRPFIYHEVIYYGGDGIKSSDYTKLGRAIEFHFYRDIANVVRRHNQLKTVKNFGQPWGMVPSDDALVMVDSHDLQRFHTGQVGVNINYFESRLLKVATAFMLAWPYGVPRVMSSYHWDQKIEDGKDKNDWIGPPSDGSGNILSVTPQPDDTCNKEWICEHRWRQIYNMVHFRNVAGNEAVSHWWDNGDYQIAFGRGSKAFIAINLQDGQGLNRKLATGLPQGTYCDLVTGNLAGGKCTGGTVTVDGSGNADINIAKTAEDPFVAIHVEAKLH.

The first 21 residues, 1–21 (MAHLLLAVVAITLALSQSVFG), serve as a signal peptide directing secretion. An intrachain disulfide couples cysteine 52 to cysteine 108. 3 residues coordinate Ca(2+): asparagine 122, arginine 178, and aspartate 187. Arginine 215 is a binding site for chloride. Aspartate 217 serves as the catalytic Nucleophile. Ca(2+) is bound at residue histidine 221. Glutamate 253 functions as the Proton donor in the catalytic mechanism. A chloride-binding site is contributed by arginine 355. Disulfide bonds link cysteine 397–cysteine 403 and cysteine 470–cysteine 482.

It belongs to the glycosyl hydrolase 13 family. As to quaternary structure, monomer. Ca(2+) serves as cofactor. Requires chloride as cofactor.

Its subcellular location is the secreted. The catalysed reaction is Endohydrolysis of (1-&gt;4)-alpha-D-glucosidic linkages in polysaccharides containing three or more (1-&gt;4)-alpha-linked D-glucose units.. Activated by chloride ions. Inhibited by acarbose. Not inhibited by wheat alpha-amylase inhibitors 1 (WI-1, the tetrameric form) or 3 (WI-3, the monomeric form) and bean alpha-amylase inhibitor 1 (alphaAI-1). This Acarus siro (Flour mite) protein is Alpha-amylase.